Consider the following 440-residue polypeptide: Xylose isomerase (440 aa).

Catalysis depends on residues His100 and Asp103. Mg(2+) is bound by residues Glu231, Glu267, His270, Asp295, Asp306, Asp308, and Asp338.

This sequence belongs to the xylose isomerase family. Homotetramer. It depends on Mg(2+) as a cofactor.

It localises to the cytoplasm. The enzyme catalyses alpha-D-xylose = alpha-D-xylulofuranose. The polypeptide is Xylose isomerase (Burkholderia multivorans (strain ATCC 17616 / 249)).